Here is a 507-residue protein sequence, read N- to C-terminus: ATP synthase subunit alpha, chloroplastic (507 aa).

170–177 (GDRQTGKT) is a binding site for ATP.

This sequence belongs to the ATPase alpha/beta chains family. F-type ATPases have 2 components, CF(1) - the catalytic core - and CF(0) - the membrane proton channel. CF(1) has five subunits: alpha(3), beta(3), gamma(1), delta(1), epsilon(1). CF(0) has four main subunits: a, b, b' and c.

The protein resides in the plastid. The protein localises to the chloroplast thylakoid membrane. It carries out the reaction ATP + H2O + 4 H(+)(in) = ADP + phosphate + 5 H(+)(out). Functionally, produces ATP from ADP in the presence of a proton gradient across the membrane. The alpha chain is a regulatory subunit. The protein is ATP synthase subunit alpha, chloroplastic of Manihot esculenta (Cassava).